The following is a 513-amino-acid chain: Gluconokinase (513 aa).

Residues Lys-16, Thr-261, Gly-300, and 412 to 416 (GFARS) each bind ATP.

The protein belongs to the FGGY kinase family.

The enzyme catalyses D-gluconate + ATP = 6-phospho-D-gluconate + ADP + H(+). It participates in carbohydrate acid metabolism; D-gluconate degradation. Its activity is regulated as follows. Catabolite repression by gluconate. In Bacillus licheniformis, this protein is Gluconokinase (gntK).